The sequence spans 791 residues: Phosphoenolpyruvate synthase (791 aa).

Thr-416 carries the post-translational modification Phosphothreonine. Residue His-418 is the Tele-phosphohistidine intermediate of the active site. Residues Arg-508, Arg-575, Glu-677, Gly-698, Ser-699, Asn-700, and Asp-701 each coordinate substrate. Residue Glu-677 participates in Mg(2+) binding. Asp-701 is a Mg(2+) binding site. Tyr-744 is modified (phosphotyrosine). Cys-748 acts as the Proton donor in catalysis.

It belongs to the PEP-utilizing enzyme family. Requires Mg(2+) as cofactor.

The enzyme catalyses pyruvate + ATP + H2O = phosphoenolpyruvate + AMP + phosphate + 2 H(+). It functions in the pathway carbohydrate biosynthesis; gluconeogenesis. Catalyzes the phosphorylation of pyruvate to phosphoenolpyruvate. This is Phosphoenolpyruvate synthase (ppsA) from Pseudomonas aeruginosa (strain UCBPP-PA14).